A 478-amino-acid polypeptide reads, in one-letter code: Adenosylhomocysteinase (478 aa).

Thr57, Asp139, and Glu201 together coordinate substrate. 202-204 (TTT) lines the NAD(+) pocket. Residues Lys231 and Asp235 each contribute to the substrate site. NAD(+) contacts are provided by residues Asn236, 265–270 (GYGDVG), Glu288, Asn323, 344–346 (IGH), and Asn392.

Belongs to the adenosylhomocysteinase family. It depends on NAD(+) as a cofactor.

It is found in the cytoplasm. The enzyme catalyses S-adenosyl-L-homocysteine + H2O = L-homocysteine + adenosine. It functions in the pathway amino-acid biosynthesis; L-homocysteine biosynthesis; L-homocysteine from S-adenosyl-L-homocysteine: step 1/1. In terms of biological role, may play a key role in the regulation of the intracellular concentration of adenosylhomocysteine. In Corynebacterium glutamicum (strain R), this protein is Adenosylhomocysteinase.